The primary structure comprises 393 residues: MKQLKPNSKYLLFGQALSFMGDYCVLPALLILSTYYHDYWVTSGVIAVRSIPMVFQPFLGVLVDRLDRVKIMLWTDVIRGVIFLGLTFLPKGEYPLLFLALLFVSYGSGVFFNPARLAVMSSLEADIKNINTLFAKATTISIIVGAAAGGLFLLGGSVELAVAFNGVTYLVSAFFISRIKLQYVPIQSENVREAFQSFKEGLKEIKTNAFVLNAMFTMITMALLWGVVYSYFPIVSRFLGDGEIGNFLLTFCIGFGGFIGAALVSKWGFNNNKGLMYFTVLSIVSLALFLFTPIFAVSVIAAILFFIAMEYGEVLAKVKVQENAANQIQGRIFSVAEASIGLCIAVGSMLINIVDAAVIMAFIVLLVSGLFLHTKLVNKSFSERNNESEQIHL.

The next 10 helical transmembrane spans lie at 11–31 (LLFG…ALLI), 43–63 (SGVI…GVLV), 69–89 (VKIM…LTFL), 92–112 (GEYP…GVFF), 133–155 (LFAK…FLLG), 160–177 (LAVA…FFIS), 215–235 (MFTM…FPIV), 244–264 (IGNF…AALV), 287–307 (ALFL…LFFI), and 353–373 (IVDA…LFLH).

Belongs to the major facilitator superfamily.

Its subcellular location is the cell membrane. In terms of biological role, part of the bacilysin biosynthesis operon. May be involved in self-resistance to bacilysin by permitting efflux of this antibiotic. This Bacillus amyloliquefaciens (Bacillus velezensis) protein is Putative bacilysin exporter BacE (bacE).